A 230-amino-acid chain; its full sequence is 2,3-bisphosphoglycerate-dependent phosphoglycerate mutase (230 aa).

Substrate is bound by residues 8–15 (RHGQSEWN), 21–22 (TG), arginine 60, 87–90 (ERHY), lysine 98, 114–115 (RR), and 183–184 (GN). The Tele-phosphohistidine intermediate role is filled by histidine 9. Glutamate 87 functions as the Proton donor/acceptor in the catalytic mechanism.

This sequence belongs to the phosphoglycerate mutase family. BPG-dependent PGAM subfamily.

The enzyme catalyses (2R)-2-phosphoglycerate = (2R)-3-phosphoglycerate. The protein operates within carbohydrate degradation; glycolysis; pyruvate from D-glyceraldehyde 3-phosphate: step 3/5. In terms of biological role, catalyzes the interconversion of 2-phosphoglycerate and 3-phosphoglycerate. The protein is 2,3-bisphosphoglycerate-dependent phosphoglycerate mutase of Lactobacillus acidophilus (strain ATCC 700396 / NCK56 / N2 / NCFM).